The following is a 293-amino-acid chain: Protein phosphatase 1 regulatory subunit 3B (293 aa).

The CBM21 domain maps to 129 to 237 (RQRIENDHVC…NNQGKNYRII (109 aa)).

As to quaternary structure, interacts with glycogen, PPP1CC catalytic subunit of PP1 and PYGL. Associates with glycogen particles. Forms complexes with debranching enzyme, glycogen phosphorylase, glycogen synthase and phosphorylase kinase which is necessary for its regulation of PP1 activity.

In terms of biological role, acts as a glycogen-targeting subunit for phosphatase PP1. Facilitates interaction of the PP1 with enzymes of the glycogen metabolism and regulates its activity. Suppresses the rate at which PP1 dephosphorylates (inactivates) glycogen phosphorylase and enhances the rate at which it activates glycogen synthase and therefore limits glycogen breakdown. The polypeptide is Protein phosphatase 1 regulatory subunit 3B (ppp1r3b) (Danio rerio (Zebrafish)).